The primary structure comprises 403 residues: Cytoplasmic tRNA 2-thiolation protein 2 (403 aa).

It belongs to the CTU2/NCS2 family.

It localises to the cytoplasm. It functions in the pathway tRNA modification; 5-methoxycarbonylmethyl-2-thiouridine-tRNA biosynthesis. In terms of biological role, plays a central role in 2-thiolation of mcm(5)S(2)U at tRNA wobble positions of tRNA(Lys), tRNA(Glu) and tRNA(Gln). May act by forming a heterodimer with NCS6/CTU1 that ligates sulfur from thiocarboxylated URM1 onto the uridine of tRNAs at wobble position. The polypeptide is Cytoplasmic tRNA 2-thiolation protein 2 (Drosophila willistoni (Fruit fly)).